The primary structure comprises 130 residues: L-ectoine synthase (130 aa).

The protein belongs to the ectoine synthase family.

It catalyses the reaction (2S)-4-acetamido-2-aminobutanoate = L-ectoine + H2O. It functions in the pathway amine and polyamine biosynthesis; ectoine biosynthesis; L-ectoine from L-aspartate 4-semialdehyde: step 3/3. In terms of biological role, catalyzes the circularization of gamma-N-acetyl-alpha,gamma-diaminobutyric acid (ADABA) to ectoine (1,4,5,6-tetrahydro-2-methyl-4-pyrimidine carboxylic acid), which is an excellent osmoprotectant. In Mycobacteroides abscessus (strain ATCC 19977 / DSM 44196 / CCUG 20993 / CIP 104536 / JCM 13569 / NCTC 13031 / TMC 1543 / L948) (Mycobacterium abscessus), this protein is L-ectoine synthase.